The sequence spans 20 residues: D-alpha-glycerophosphatase (20 aa).

As to quaternary structure, monomer. The cofactor is Mg(2+). It depends on Mn(2+) as a cofactor.

The protein resides in the cytoplasm. Its pathway is polyol metabolism; glycerol biosynthesis. This Bacillus licheniformis protein is D-alpha-glycerophosphatase.